We begin with the raw amino-acid sequence, 74 residues long: Protein RALF-like 25 (74 aa).

An N-terminal signal peptide occupies residues Met1–Ala22. 2 cysteine pairs are disulfide-bonded: Cys35-Cys44 and Cys62-Cys68.

This sequence belongs to the plant rapid alkalinization factor (RALF) family.

It localises to the secreted. Cell signaling peptide that may regulate plant stress, growth, and development. Mediates a rapid alkalinization of extracellular space by mediating a transient increase in the cytoplasmic Ca(2+) concentration leading to a calcium-dependent signaling events through a cell surface receptor and a concomitant activation of some intracellular mitogen-activated protein kinases. This Arabidopsis thaliana (Mouse-ear cress) protein is Protein RALF-like 25 (RALFL25).